The chain runs to 889 residues: Disease resistance protein RPS5 (889 aa).

Glycine 2 is lipidated: N-myristoyl glycine. Cysteine 4 carries the S-palmitoyl cysteine lipid modification. Residues 29–58 (IHNLSKNLASLQKAMRMLKARQYDVIRRLE) are a coiled coil. The 305-residue stretch at 140-444 (SEATPFADVD…SEGFINEKEG (305 aa)) folds into the NB-ARC domain. Position 183-190 (183-190 (GMGGVGKT)) interacts with ATP. LRR repeat units follow at residues 518 to 539 (TVRK…HECA), 540 to 561 (ALTT…FFRC), 564 to 586 (HLVV…ISEL), 588 to 610 (SLRY…WTLK), 611 to 633 (KLIH…SNLW), and 634 to 656 (NLRT…KELQ).

This sequence belongs to the disease resistance NB-LRR family. As to quaternary structure, in uninfected plants, interacts with PBS1 through the coiled coil domain. Homodimer.

It is found in the cell membrane. In terms of biological role, disease resistance (R) protein that specifically recognizes the avrPphB type III effector avirulence protein from Pseudomonas syringae. Also confers resistance against Hyaloperonospora parasitica (downy mildew). Resistance proteins guard the plant against pathogens that contain an appropriate avirulence protein via an indirect interaction with this avirulence protein. That triggers a defense system including the hypersensitive response, which restricts the pathogen growth. Requires PBS1 to trigger the defense reaction against avrPphB. In case of infection by Pseudomonas syringae, AvrPphB triggers RPS5-mediated defense mechanism via the cleavage of PBS1, suggesting that the cleavage of PBS1 could trigger an exchange of ADP for ATP, thereby activating RPS5. May function as a fine-tuned sensor of alterations in the structure of the effector target PBS1. This Arabidopsis thaliana (Mouse-ear cress) protein is Disease resistance protein RPS5 (RPS5).